A 344-amino-acid polypeptide reads, in one-letter code: L-threonine 3-dehydrogenase (344 aa).

Residue C42 participates in Zn(2+) binding. Residues T44 and H47 each act as charge relay system in the active site. Residues H67, E68, C97, C100, C103, and C111 each coordinate Zn(2+). NAD(+) is bound by residues I179, D199, R204, 266–268 (LGI), and 290–291 (IY).

This sequence belongs to the zinc-containing alcohol dehydrogenase family. In terms of assembly, homotetramer. It depends on Zn(2+) as a cofactor.

It is found in the cytoplasm. It carries out the reaction L-threonine + NAD(+) = (2S)-2-amino-3-oxobutanoate + NADH + H(+). The protein operates within amino-acid degradation; L-threonine degradation via oxydo-reductase pathway; glycine from L-threonine: step 1/2. Catalyzes the NAD(+)-dependent oxidation of L-threonine to 2-amino-3-ketobutyrate. This chain is L-threonine 3-dehydrogenase, found in Sinorhizobium medicae (strain WSM419) (Ensifer medicae).